The chain runs to 148 residues: Endothelial differentiation-related factor 1 (148 aa).

The residue at position 2 (alanine 2) is an N-acetylalanine. Phosphoserine is present on serine 4. Residue lysine 25 is modified to N6-methyllysine. Positions 34–67 are disordered; it reads RGEDVETSKKWAAGQNKQHSITKNTAKLDRETEE. An interaction with NR5A2, PPARG and NR1H3 region spans residues 37–113; sequence DVETSKKWAA…QVIADYESGR (77 aa). Over residues 48-58 the composition is skewed to polar residues; it reads QNKQHSITKNT. The tract at residues 69-108 is interaction with TBP and NR5A1; that stretch reads HHDRVTLEVGKVIQRGRQSKGLTQKDLATKINEKPQVIAD. An IQ motif motif is present at residues 81-88; that stretch reads IQRGRQSK. Residues 81–135 enclose the HTH cro/C1-type domain; it reads IQRGRQSKGLTQKDLATKINEKPQVIADYESGRAIPNNQVLGKIERAIGLKLRGK. The H-T-H motif DNA-binding region spans 92-111; sequence QKDLATKINEKPQVIADYES.

In terms of assembly, interacts with TBP and the transcription factor IID (TFIID) complex, NR5A2, NR1H3 and PPARG. Interaction with TBP is regulated by phosphorylation. Binds NR5A1, ATF1, FOS and JUN via their conserved basic region. Binding to calmodulin is regulated by calcium and phosphorylation of the IQ motif. Post-translationally, phosphorylated. In terms of tissue distribution, expressed in brain, liver, kidney and heart (at protein level). Also expressed in testis.

The protein resides in the cytoplasm. It is found in the nucleus. Functionally, transcriptional coactivator stimulating NR5A1 and ligand-dependent NR1H3/LXRA and PPARG transcriptional activities. Enhances the DNA-binding activity of ATF1, ATF2, CREB1 and NR5A1. Regulates nitric oxid synthase activity probably by sequestering calmodulin in the cytoplasm. Might function in endothelial cells differentiation, hormone-induced cardiomyocytes hypertrophy and lipid metabolism. In Mus musculus (Mouse), this protein is Endothelial differentiation-related factor 1 (Edf1).